The primary structure comprises 83 residues: Beta-defensin 119 (83 aa).

Positions 1 to 20 (MKFLFLFLAILLAMEPVVSG) are cleaved as a signal peptide. Disulfide bonds link C27–C54, C34–C48, and C38–C55.

The protein belongs to the beta-defensin family.

The protein localises to the secreted. Its function is as follows. Has antibacterial activity. In Bos taurus (Bovine), this protein is Beta-defensin 119 (DEFB119).